The sequence spans 370 residues: Protein-tyrosine sulfotransferase 1 (370 aa).

Over Met1–Asn8 the chain is Cytoplasmic. Residues Leu9–Gly25 traverse the membrane as a helical; Signal-anchor for type II membrane protein segment. The Lumenal segment spans residues Gln26–Glu370. Asn60 is a glycosylation site (N-linked (GlcNAc...) asparagine). Residue Arg79–Thr83 participates in 3'-phosphoadenylyl sulfate binding. Cysteines 97 and 157 form a disulfide. Glu100 serves as the catalytic Proton donor/acceptor. Residues Arg102–Arg106 form an interaction with peptide substrate region. Residues Arg184, Ser192, and Arg196 each coordinate 3'-phosphoadenylyl sulfate. The cysteines at positions 226 and 234 are disulfide-linked. Residue Tyr239 coordinates 3'-phosphoadenylyl sulfate. N-linked (GlcNAc...) asparagine glycosylation occurs at Asn262. 3'-phosphoadenylyl sulfate-binding positions include Ser286–Asn295 and Lys301.

It belongs to the protein sulfotransferase family. In terms of assembly, homodimer. Can also form heterodimers with TPST2. In terms of processing, N-glycosylated. As to expression, ubiquitous. Detected in heart, brain, lung, liver, spleen, kidney, skeletal muscle and testis.

Its subcellular location is the golgi apparatus membrane. The catalysed reaction is L-tyrosyl-[protein] + 3'-phosphoadenylyl sulfate = O-sulfo-L-tyrosine-[protein] + adenosine 3',5'-bisphosphate + H(+). Catalyzes the O-sulfation of tyrosine residues within acidic motifs of polypeptides, using 3'-phosphoadenylyl sulfate (PAPS) as cosubstrate. This is Protein-tyrosine sulfotransferase 1 (Tpst1) from Mus musculus (Mouse).